We begin with the raw amino-acid sequence, 594 residues long: MLPAHKHTLETLLTDVVKQVAQATQGESEAAFIAPAITLERPKVAAHGDVACNVAMQLAKPMRANPRQLAQQIVDALLADPLAKGLVDGAEVAGPGFINLRLSAASKQAVIAAVFAQREAFGRSQREAGKRVLVEFVSANPTGPLHVGHGRQAALGDAMSNVLASQGFDVHREFYYNDAGVQIGNLAISTQARARGLKPGDPGWPEAAYNGEYIADIARDYLNGETVSASDGEPVKGAGDVEDLEAIRRFAVAYLRHEQDMDLQAFGVKFDQYYLESSLYKEGRVEKTVNELIAAGKTYEQEGALWLRTTDDGDDKDRVMRKSDGTYTYFVPDVAYHETKWERGFTKVINIQGSDHHGTIARVRAGLQGLGIGIPKGYPDYVLHKMVTVMRDGQEVKISKRAGSYVTVRDLIEWSGGAVPGQEAAPDLLDEETIRRGRDAVRFFLISRKADTEFVFDVDLALKQNDENPVYYVQYAHARICSVINEWKSRYGADETGLPVVDLSPLDSERATALLQKLAEFPDMLTHAAGELAPHAVAFYLRDLAGEFHSFYNAERVLVDDEAQRNARIALLAATRQVLANGLAVIGVSAPAKM.

The short motif at 139–149 is the 'HIGH' region element; sequence ANPTGPLHVGH.

This sequence belongs to the class-I aminoacyl-tRNA synthetase family. Monomer.

It is found in the cytoplasm. The enzyme catalyses tRNA(Arg) + L-arginine + ATP = L-arginyl-tRNA(Arg) + AMP + diphosphate. The sequence is that of Arginine--tRNA ligase from Paraburkholderia phymatum (strain DSM 17167 / CIP 108236 / LMG 21445 / STM815) (Burkholderia phymatum).